A 31-amino-acid polypeptide reads, in one-letter code: Photosystem II reaction center protein T (31 aa).

Residues 3–23 form a helical membrane-spanning segment; it reads SVAYILVLTMALSVIFFAIAF.

This sequence belongs to the PsbT family. As to quaternary structure, PSII is composed of 1 copy each of membrane proteins PsbA, PsbB, PsbC, PsbD, PsbE, PsbF, PsbH, PsbI, PsbJ, PsbK, PsbL, PsbM, PsbT, PsbX, PsbY, PsbZ, Psb30/Ycf12, peripheral proteins PsbO, CyanoQ (PsbQ), PsbU, PsbV and a large number of cofactors. It forms dimeric complexes.

It localises to the cellular thylakoid membrane. Functionally, found at the monomer-monomer interface of the photosystem II (PS II) dimer, plays a role in assembly and dimerization of PSII. PSII is a light-driven water plastoquinone oxidoreductase, using light energy to abstract electrons from H(2)O, generating a proton gradient subsequently used for ATP formation. The polypeptide is Photosystem II reaction center protein T (Microcystis aeruginosa (strain NIES-843 / IAM M-2473)).